The primary structure comprises 346 residues: D-alanine--D-alanine ligase (346 aa).

The 195-residue stretch at lysine 133–lysine 327 folds into the ATP-grasp domain. Leucine 159–tyrosine 211 is a binding site for ATP. 3 residues coordinate Mg(2+): aspartate 284, glutamate 296, and asparagine 298.

This sequence belongs to the D-alanine--D-alanine ligase family. Requires Mg(2+) as cofactor. The cofactor is Mn(2+).

Its subcellular location is the cytoplasm. It carries out the reaction 2 D-alanine + ATP = D-alanyl-D-alanine + ADP + phosphate + H(+). It functions in the pathway cell wall biogenesis; peptidoglycan biosynthesis. Its function is as follows. Cell wall formation. The protein is D-alanine--D-alanine ligase of Campylobacter jejuni subsp. jejuni serotype O:2 (strain ATCC 700819 / NCTC 11168).